The chain runs to 256 residues: ATP synthase peripheral stalk subunit b, mitochondrial (256 aa).

A mitochondrion-targeting transit peptide spans 1–42 (MLSRVVLSAAATAAPCLKNAAVLGPGVLQATRVFHTGQPRLA). Residue Lys-131 is modified to N6-succinyllysine. Residues Lys-139, Lys-154, Lys-162, Lys-221, Lys-233, and Lys-244 each carry the N6-acetyllysine modification.

The protein belongs to the eukaryotic ATPase B chain family. In terms of assembly, component of the ATP synthase complex composed at least of ATP5F1A/subunit alpha, ATP5F1B/subunit beta, ATP5MC1/subunit c (homooctomer), MT-ATP6/subunit a, MT-ATP8/subunit 8, ATP5ME/subunit e, ATP5MF/subunit f, ATP5MG/subunit g, ATP5MK/subunit k, ATP5MJ/subunit j, ATP5F1C/subunit gamma, ATP5F1D/subunit delta, ATP5F1E/subunit epsilon, ATP5PF/subunit F6, ATP5PB/subunit b, ATP5PD/subunit d, ATP5PO/subunit OSCP. ATP synthase complex consists of a soluble F(1) head domain (subunits alpha(3) and beta(3)) - the catalytic core - and a membrane F(0) domain - the membrane proton channel (subunits c, a, 8, e, f, g, k and j). These two domains are linked by a central stalk (subunits gamma, delta, and epsilon) rotating inside the F1 region and a stationary peripheral stalk (subunits F6, b, d, and OSCP).

It localises to the mitochondrion. Its subcellular location is the mitochondrion inner membrane. Its function is as follows. Subunit b, of the mitochondrial membrane ATP synthase complex (F(1)F(0) ATP synthase or Complex V) that produces ATP from ADP in the presence of a proton gradient across the membrane which is generated by electron transport complexes of the respiratory chain. ATP synthase complex consist of a soluble F(1) head domain - the catalytic core - and a membrane F(1) domain - the membrane proton channel. These two domains are linked by a central stalk rotating inside the F(1) region and a stationary peripheral stalk. During catalysis, ATP synthesis in the catalytic domain of F(1) is coupled via a rotary mechanism of the central stalk subunits to proton translocation. In vivo, can only synthesize ATP although its ATP hydrolase activity can be activated artificially in vitro. Part of the complex F(0) domain. Part of the complex F(0) domain and the peripheric stalk, which acts as a stator to hold the catalytic alpha(3)beta(3) subcomplex and subunit a/ATP6 static relative to the rotary elements. This chain is ATP synthase peripheral stalk subunit b, mitochondrial, found in Rattus norvegicus (Rat).